A 212-amino-acid polypeptide reads, in one-letter code: ATP phosphoribosyltransferase (212 aa).

The protein belongs to the ATP phosphoribosyltransferase family. Short subfamily. Heteromultimer composed of HisG and HisZ subunits.

The protein resides in the cytoplasm. The enzyme catalyses 1-(5-phospho-beta-D-ribosyl)-ATP + diphosphate = 5-phospho-alpha-D-ribose 1-diphosphate + ATP. It participates in amino-acid biosynthesis; L-histidine biosynthesis; L-histidine from 5-phospho-alpha-D-ribose 1-diphosphate: step 1/9. In terms of biological role, catalyzes the condensation of ATP and 5-phosphoribose 1-diphosphate to form N'-(5'-phosphoribosyl)-ATP (PR-ATP). Has a crucial role in the pathway because the rate of histidine biosynthesis seems to be controlled primarily by regulation of HisG enzymatic activity. The protein is ATP phosphoribosyltransferase of Albidiferax ferrireducens (strain ATCC BAA-621 / DSM 15236 / T118) (Rhodoferax ferrireducens).